A 405-amino-acid chain; its full sequence is Riboflavin biosynthesis protein RibBA (405 aa).

Positions 1-205 are DHBP synthase; sequence MEQIKLDSIA…IKDLIEYRLT (205 aa). D-ribulose 5-phosphate-binding positions include 30–31, Asp35, 144–148, and Glu168; these read RE and RVGHT. Position 31 (Glu31) interacts with Mg(2+). Residue His147 participates in Mg(2+) binding. A GTP cyclohydrolase II region spans residues 206–405; it reads HESLVKREIG…KMGHTILKKD (200 aa). GTP is bound at residue 256 to 260; that stretch reads RVHSS. Residues Cys261, Cys272, and Cys274 each coordinate Zn(2+). Residues Gln277, 299–301, and Thr321 each bind GTP; that span reads EGR. Asp333 functions as the Proton acceptor; for GTP cyclohydrolase activity in the catalytic mechanism. Catalysis depends on Arg335, which acts as the Nucleophile; for GTP cyclohydrolase activity. GTP-binding residues include Thr356 and Lys361.

It in the N-terminal section; belongs to the DHBP synthase family. This sequence in the C-terminal section; belongs to the GTP cyclohydrolase II family. Mg(2+) is required as a cofactor. It depends on Mn(2+) as a cofactor. Requires Zn(2+) as cofactor.

It carries out the reaction D-ribulose 5-phosphate = (2S)-2-hydroxy-3-oxobutyl phosphate + formate + H(+). The catalysed reaction is GTP + 4 H2O = 2,5-diamino-6-hydroxy-4-(5-phosphoribosylamino)-pyrimidine + formate + 2 phosphate + 3 H(+). It functions in the pathway cofactor biosynthesis; riboflavin biosynthesis; 2-hydroxy-3-oxobutyl phosphate from D-ribulose 5-phosphate: step 1/1. The protein operates within cofactor biosynthesis; riboflavin biosynthesis; 5-amino-6-(D-ribitylamino)uracil from GTP: step 1/4. Its function is as follows. Catalyzes the conversion of D-ribulose 5-phosphate to formate and 3,4-dihydroxy-2-butanone 4-phosphate. Catalyzes the conversion of GTP to 2,5-diamino-6-ribosylamino-4(3H)-pyrimidinone 5'-phosphate (DARP), formate and pyrophosphate. The protein is Riboflavin biosynthesis protein RibBA of Cytophaga hutchinsonii (strain ATCC 33406 / DSM 1761 / CIP 103989 / NBRC 15051 / NCIMB 9469 / D465).